A 219-amino-acid polypeptide reads, in one-letter code: Ribose-5-phosphate isomerase A (219 aa).

Substrate contacts are provided by residues 28–31 (TGST), 81–84 (DGAD), and 94–97 (KGGG). The Proton acceptor role is filled by Glu-103. Lys-121 contributes to the substrate binding site.

The protein belongs to the ribose 5-phosphate isomerase family. Homodimer.

The catalysed reaction is aldehydo-D-ribose 5-phosphate = D-ribulose 5-phosphate. Its pathway is carbohydrate degradation; pentose phosphate pathway; D-ribose 5-phosphate from D-ribulose 5-phosphate (non-oxidative stage): step 1/1. Its function is as follows. Catalyzes the reversible conversion of ribose-5-phosphate to ribulose 5-phosphate. The sequence is that of Ribose-5-phosphate isomerase A from Salmonella choleraesuis (strain SC-B67).